The following is a 479-amino-acid chain: Adenylate kinase 8 (479 aa).

2 adenylate kinase regions span residues 58–258 (PKVV…TYVQ) and 269–471 (PKVL…SGII). 67–72 (ASGKTT) lines the ATP pocket. The interval 87-113 (TKESLLEREFSRLSVEAKSYYQVYKKI) is NMP 1. AMP is bound by residues 140–143 (GIPE), Gln147, and Arg203. The interval 177–206 (GKRIDPVTGEIYHTTFDWPPEPEIQNRLRQ) is LID 1. 278–283 (GSGKRL) is a binding site for ATP. The NMP 2 stretch occupies residues 298 to 327 (SCGQLLKEAVAAKSSFGELIQPFFEKRMTV). AMP contacts are provided by residues 325–327 (MTV), 354–357 (GFPR), and Gln361. The LID 2 stretch occupies residues 391–424 (LRRTDPVTGERFHLMYKPPPTIEVQVRLLQNPKD). Arg392 is a binding site for ATP.

Belongs to the adenylate kinase family. As to quaternary structure, interacts with CFAP45 and CFAP52; CFAP45 and AK8 dimerization may create a cavity at the interface of the dimer that can accommodate AMP.

It is found in the cytoplasm. Its subcellular location is the cytosol. The protein resides in the cytoskeleton. It localises to the cilium axoneme. It carries out the reaction AMP + ATP = 2 ADP. The enzyme catalyses a 2'-deoxyribonucleoside 5'-diphosphate + ATP = a 2'-deoxyribonucleoside 5'-triphosphate + ADP. It catalyses the reaction a ribonucleoside 5'-diphosphate + ATP = a ribonucleoside 5'-triphosphate + ADP. Nucleoside monophosphate (NMP) kinase that catalyzes the reversible transfer of the terminal phosphate group between nucleoside triphosphates and monophosphates. Has highest activity toward AMP, and weaker activity toward dAMP, CMP and dCMP. Also displays broad nucleoside diphosphate kinase activity. The protein is Adenylate kinase 8 (Ak8) of Mus musculus (Mouse).